A 128-amino-acid chain; its full sequence is Ribonuclease P protein component (128 aa).

It belongs to the RnpA family. Consists of a catalytic RNA component (M1 or rnpB) and a protein subunit.

The enzyme catalyses Endonucleolytic cleavage of RNA, removing 5'-extranucleotides from tRNA precursor.. RNaseP catalyzes the removal of the 5'-leader sequence from pre-tRNA to produce the mature 5'-terminus. It can also cleave other RNA substrates such as 4.5S RNA. The protein component plays an auxiliary but essential role in vivo by binding to the 5'-leader sequence and broadening the substrate specificity of the ribozyme. The protein is Ribonuclease P protein component of Methylococcus capsulatus (strain ATCC 33009 / NCIMB 11132 / Bath).